A 599-amino-acid polypeptide reads, in one-letter code: Aspartate--tRNA(Asp/Asn) ligase (599 aa).

L-aspartate is bound at residue E172. Residues 196–199 form an aspartate region; the sequence is QLFK. R218 lines the L-aspartate pocket. ATP-binding positions include 218 to 220 and Q227; that span reads RDE. H455 is an L-aspartate binding site. Position 489 (E489) interacts with ATP. R496 contributes to the L-aspartate binding site. ATP is bound at residue 541-544; the sequence is GLDR.

Belongs to the class-II aminoacyl-tRNA synthetase family. Type 1 subfamily. Homodimer.

The protein resides in the cytoplasm. It catalyses the reaction tRNA(Asx) + L-aspartate + ATP = L-aspartyl-tRNA(Asx) + AMP + diphosphate. In terms of biological role, aspartyl-tRNA synthetase with relaxed tRNA specificity since it is able to aspartylate not only its cognate tRNA(Asp) but also tRNA(Asn). Reaction proceeds in two steps: L-aspartate is first activated by ATP to form Asp-AMP and then transferred to the acceptor end of tRNA(Asp/Asn). This Herminiimonas arsenicoxydans protein is Aspartate--tRNA(Asp/Asn) ligase.